A 60-amino-acid chain; its full sequence is MKNTILILFTAFIALLGFFGMSAEALADPIADPVAGPNPEADPEAINLKAIAAFAKKLLG.

A signal peptide spans 1-27; it reads MKNTILILFTAFIALLGFFGMSAEALA. 4 AXPX repeats span residues 27 to 30, 31 to 34, 35 to 38, and 41 to 44; these read ADPI, ADPV, AGPN, and ADPE. Positions 28 to 45 are excised as a propeptide; it reads DPIADPVAGPNPEADPEA. Leu-59 is modified (leucine amide).

The protein belongs to the MCD family. Mastoparan subfamily. Expressed by the venom gland.

The protein localises to the secreted. The protein resides in the target cell membrane. Functionally, antimicrobial and mast cell degranulating peptide. Has broad spectrum antibacterial activity against both Gram-positive and Gram-negative bacteria (S.aureus MIC=24-32 ug/ml, S.xylosus MIC=2 ug/ml, S.alactolyticus MIC=16 ug/ml, C.koseri MIC=4 ug/ml, E.coli MIC=8 ug/ml, K.pneumoniae MIC=32 ug/ml, P.aerugiosa MIC=128 ug/ml, S.choleraesuis MIC=16 ug/ml, S.typhimurium MIC=32 ug/ml, V.parahamelytics MIC=32 ug/ml). Affects membrane permeability of E.coli. Shows hemolytic activities on sheep, chicken and human erythrocytes. Its mast cell degranulation activity may be related to the activation of G-protein coupled receptors in mast cells as well as interaction with other proteins located in cell endosomal membranes in the mast cells. In Vespa ducalis (Black-tailed hornet), this protein is Mastoparan-D.